The following is a 314-amino-acid chain: Ribosomal protein L11 methyltransferase (314 aa).

The S-adenosyl-L-methionine site is built by Thr152, Gly184, Asp206, and Asn248.

The protein belongs to the methyltransferase superfamily. PrmA family.

It is found in the cytoplasm. The catalysed reaction is L-lysyl-[protein] + 3 S-adenosyl-L-methionine = N(6),N(6),N(6)-trimethyl-L-lysyl-[protein] + 3 S-adenosyl-L-homocysteine + 3 H(+). Its function is as follows. Methylates ribosomal protein L11. This Geotalea daltonii (strain DSM 22248 / JCM 15807 / FRC-32) (Geobacter daltonii) protein is Ribosomal protein L11 methyltransferase.